Reading from the N-terminus, the 470-residue chain is Growth/differentiation factor 6 (470 aa).

The signal sequence occupies residues 1 to 22; sequence MDTSRVLLSAVFLISFLWDLPG. Positions 23–350 are excised as a propeptide; that stretch reads FQQASISSSS…SPSPGRRRRR (328 aa). Residues 28–98 form a disordered region; that stretch reads ISSSSSSAEL…REPPGRGPRV (71 aa). Over residues 45-80 the composition is skewed to basic and acidic residues; that stretch reads SRKEGRMPRAPRENATAREPLDRQEPPPRPQEEPQR. Asparagine 120 carries N-linked (GlcNAc...) asparagine glycosylation. 2 disordered regions span residues 247–272 and 308–366; these read PGAAEDEARAPGPQQPPPPDLRSLGF and TEVV…KKSR. Residues 321–333 are compositionally biased toward pro residues; it reads GPPPPPPPPPPSG. Residues 345-366 show a composition bias toward basic residues; that stretch reads GRRRRRTAFASRHGKRHGKKSR. 3 disulfides stabilise this stretch: cysteine 369-cysteine 435, cysteine 398-cysteine 467, and cysteine 402-cysteine 469.

The protein belongs to the TGF-beta family. Homodimer; disulfide-linked.

It is found in the secreted. Growth factor that controls proliferation and cellular differentiation in the retina and bone formation. Plays a key role in regulating apoptosis during retinal development. Establishes dorsal-ventral positional information in the retina and controls the formation of the retinotectal map. Required for normal formation of bones and joints in the limbs, skull, digits and axial skeleton. Plays a key role in establishing boundaries between skeletal elements during development. Regulation of GDF6 expression seems to be a mechanism for evolving species-specific changes in skeletal structures. Seems to positively regulate differentiation of chondrogenic tissue through the growth factor receptors subunits BMPR1A, BMPR1B, BMPR2 and ACVR2A, leading to the activation of SMAD1-SMAD5-SMAD8 complex. The regulation of chondrogenic differentiation is inhibited by NOG. Also involved in the induction of adipogenesis from mesenchymal stem cells. This mechanism acts through the growth factor receptors subunits BMPR1A, BMPR2 and ACVR2A and the activation of SMAD1-SMAD5-SMAD8 complex and MAPK14/p38. The chain is Growth/differentiation factor 6 (GDF6) from Bos taurus (Bovine).